Consider the following 233-residue polypeptide: Large ribosomal subunit protein uL1 (233 aa).

Belongs to the universal ribosomal protein uL1 family. As to quaternary structure, part of the 50S ribosomal subunit.

Its function is as follows. Binds directly to 23S rRNA. The L1 stalk is quite mobile in the ribosome, and is involved in E site tRNA release. Protein L1 is also a translational repressor protein, it controls the translation of the L11 operon by binding to its mRNA. The chain is Large ribosomal subunit protein uL1 from Polynucleobacter necessarius subsp. necessarius (strain STIR1).